Reading from the N-terminus, the 364-residue chain is Methylthioribose-1-phosphate isomerase (364 aa).

Substrate contacts are provided by residues 53–55 (RGA), R90, and Q200. Residue D241 is the Proton donor of the active site. 251-252 (NK) is a substrate binding site.

The protein belongs to the eIF-2B alpha/beta/delta subunits family. MtnA subfamily.

It catalyses the reaction 5-(methylsulfanyl)-alpha-D-ribose 1-phosphate = 5-(methylsulfanyl)-D-ribulose 1-phosphate. The protein operates within amino-acid biosynthesis; L-methionine biosynthesis via salvage pathway; L-methionine from S-methyl-5-thio-alpha-D-ribose 1-phosphate: step 1/6. In terms of biological role, catalyzes the interconversion of methylthioribose-1-phosphate (MTR-1-P) into methylthioribulose-1-phosphate (MTRu-1-P). This is Methylthioribose-1-phosphate isomerase from Methylobacterium nodulans (strain LMG 21967 / CNCM I-2342 / ORS 2060).